Reading from the N-terminus, the 276-residue chain is Diaminopimelate epimerase (276 aa).

Residues Asn-13, Gln-46, and Asn-66 each coordinate substrate. The active-site Proton donor is Cys-75. Substrate-binding positions include Gly-76–Asn-77, Asn-159, Asn-192, and Glu-210–Arg-211. Residue Cys-219 is the Proton acceptor of the active site. Gly-220–Thr-221 contributes to the substrate binding site.

This sequence belongs to the diaminopimelate epimerase family. Homodimer.

The protein localises to the cytoplasm. It catalyses the reaction (2S,6S)-2,6-diaminopimelate = meso-2,6-diaminopimelate. It participates in amino-acid biosynthesis; L-lysine biosynthesis via DAP pathway; DL-2,6-diaminopimelate from LL-2,6-diaminopimelate: step 1/1. Its function is as follows. Catalyzes the stereoinversion of LL-2,6-diaminopimelate (L,L-DAP) to meso-diaminopimelate (meso-DAP), a precursor of L-lysine and an essential component of the bacterial peptidoglycan. The protein is Diaminopimelate epimerase of Pseudomonas savastanoi pv. phaseolicola (strain 1448A / Race 6) (Pseudomonas syringae pv. phaseolicola (strain 1448A / Race 6)).